The primary structure comprises 120 residues: A-type ATP synthase subunit F (120 aa).

The protein belongs to the V-ATPase F subunit family. Has multiple subunits with at least A(3), B(3), C, D, E, F, H, I and proteolipid K(x).

It localises to the cell membrane. Functionally, component of the A-type ATP synthase that produces ATP from ADP in the presence of a proton gradient across the membrane. The polypeptide is A-type ATP synthase subunit F (Halobacterium salinarum (strain ATCC 29341 / DSM 671 / R1)).